Here is a 1006-residue protein sequence, read N- to C-terminus: 5'-3' exoribonuclease 2 (1006 aa).

Coiled-coil stretches lie at residues 256 to 287 (FAQD…NSEQ) and 453 to 544 (RLKK…AESE). Residues 492-529 (DDAVSKANKTNFNLAEVMKQKIINKKHRLEKDNEEEEI) form a required for retention in the nucleus region. A compositionally biased stretch (basic and acidic residues) spans 561 to 575 (DRENSETTEVSRDSP). Disordered regions lie at residues 561 to 584 (DREN…NVSE) and 939 to 1006 (HNYG…ANRR). Ser-574 bears the Phosphoserine mark. A compositionally biased stretch (polar residues) spans 939–956 (HNYGRNSYNSQPGFNNSR). 6 tandem repeats follow at residues 955–958 (SRYD), 961–964 (NNNY), 972–974 (NNN), 975–978 (YSGN), 984–986 (YSG), and 996–999 (SRYD). The interval 955 to 999 (SRYDGGNNNYRQNSNYRNNNYSGNRNSGQYSGNSYSRNNKQSRYD) is 2 X 4 AA repeats of S-R-Y-D, N-N-N-Y, Y-S-G-N. A compositionally biased stretch (low complexity) spans 959–993 (GGNNNYRQNSNYRNNNYSGNRNSGQYSGNSYSRNN). Residues 996–1006 (SRYDNSRANRR) show a composition bias toward basic and acidic residues.

Belongs to the 5'-3' exonuclease family. XRN2/RAT1 subfamily. Interacts with RAI1 and RTT103. The cofactor is Mg(2+). Mn(2+) serves as cofactor.

The protein localises to the nucleus. With respect to regulation, inhibited by nucleoside 3', 5'-bisphosphates. Functionally, possesses 5'-&gt;3' exoribonuclease activity. Required for the processing of nuclear mRNA, rRNA and small nucleolar RNA (snoRNA) precursors. May promote termination of transcription by RNA polymerase II via the recruitment of 3'-end processing factors to the poly(A) site and by the degradation of nascent RNA downstream of the poly(A) site. This Saccharomyces cerevisiae (strain ATCC 204508 / S288c) (Baker's yeast) protein is 5'-3' exoribonuclease 2 (RAT1).